Here is a 201-residue protein sequence, read N- to C-terminus: Small ribosomal subunit protein uS4c (201 aa).

The disordered stretch occupies residues 20–44; it reads GLTSKRPTVGSELRNQSRSTKKSQY. The region spanning 89–150 is the S4 RNA-binding domain; the sequence is MRLDNILFRL…NKKSKTLIQN (62 aa).

The protein belongs to the universal ribosomal protein uS4 family. Part of the 30S ribosomal subunit. Contacts protein S5. The interaction surface between S4 and S5 is involved in control of translational fidelity.

It localises to the plastid. The protein resides in the chloroplast. Its function is as follows. One of the primary rRNA binding proteins, it binds directly to 16S rRNA where it nucleates assembly of the body of the 30S subunit. In terms of biological role, with S5 and S12 plays an important role in translational accuracy. The chain is Small ribosomal subunit protein uS4c (rps4) from Lotus japonicus (Lotus corniculatus var. japonicus).